The following is a 205-amino-acid chain: Small ribosomal subunit protein uS4 (205 aa).

Positions 1–46 (MSKRASSKYKIDRRMGENIWGRPKSPVNRREYGPGQHGQRRKGKLS) are disordered. The 61-residue stretch at 94–154 (SRLDAIVYRA…QKSKQLAIVL (61 aa)) folds into the S4 RNA-binding domain.

Belongs to the universal ribosomal protein uS4 family. In terms of assembly, part of the 30S ribosomal subunit. Contacts protein S5. The interaction surface between S4 and S5 is involved in control of translational fidelity.

Functionally, one of the primary rRNA binding proteins, it binds directly to 16S rRNA where it nucleates assembly of the body of the 30S subunit. With S5 and S12 plays an important role in translational accuracy. In Allorhizobium ampelinum (strain ATCC BAA-846 / DSM 112012 / S4) (Agrobacterium vitis (strain S4)), this protein is Small ribosomal subunit protein uS4.